A 206-amino-acid polypeptide reads, in one-letter code: N-(5'-phosphoribosyl)anthranilate isomerase (206 aa).

The protein belongs to the TrpF family.

The enzyme catalyses N-(5-phospho-beta-D-ribosyl)anthranilate = 1-(2-carboxyphenylamino)-1-deoxy-D-ribulose 5-phosphate. Its pathway is amino-acid biosynthesis; L-tryptophan biosynthesis; L-tryptophan from chorismate: step 3/5. The protein is N-(5'-phosphoribosyl)anthranilate isomerase of Chlamydia caviae (strain ATCC VR-813 / DSM 19441 / 03DC25 / GPIC) (Chlamydophila caviae).